The primary structure comprises 490 residues: GTPase Der (490 aa).

2 consecutive EngA-type G domains span residues 3–166 (PVIA…PRDD) and 196–369 (IKIA…KSAV). GTP contacts are provided by residues 9-16 (GRPNVGKS), 56-60 (DTGGI), and 118-121 (NKVD). Residues 162-189 (FPRDDDEPAEGEEEEVVAEGEEAKRIPG) form a disordered region. Acidic residues predominate over residues 164 to 181 (RDDDEPAEGEEEEVVAEG). GTP contacts are provided by residues 202–209 (GRPNVGKS), 249–253 (DTAGV), and 314–317 (NKWD). Positions 370–454 (TRWPTSRLTQ…PIRIEFKGGE (85 aa)) constitute a KH-like domain. The interval 453–490 (GENPYEGNKNTLTDRQVNKKRRLMSHNKKASKKRRDKK) is disordered. The span at 470–490 (NKKRRLMSHNKKASKKRRDKK) shows a compositional bias: basic residues.

This sequence belongs to the TRAFAC class TrmE-Era-EngA-EngB-Septin-like GTPase superfamily. EngA (Der) GTPase family. As to quaternary structure, associates with the 50S ribosomal subunit.

Its function is as follows. GTPase that plays an essential role in the late steps of ribosome biogenesis. In Pseudomonas fluorescens (strain Pf0-1), this protein is GTPase Der.